The primary structure comprises 700 residues: DNA ligase 2 (700 aa).

NAD(+) contacts are provided by residues 42 to 46 (DDAYD) and 89 to 90 (SL). Lys-122 functions as the N6-AMP-lysine intermediate in the catalytic mechanism. Residues Arg-143, Glu-177, Lys-303, and Lys-327 each contribute to the NAD(+) site. Residues Cys-421, Cys-424, Cys-437, and Cys-443 each coordinate Zn(2+). The disordered stretch occupies residues 590–621 (MTEPGATPPRPADTDGADGATAEAPGDGGPLA). Positions 615 to 700 (GDGGPLAGMK…FAVLVAGLLS (86 aa)) constitute a BRCT domain.

The protein belongs to the NAD-dependent DNA ligase family. LigA subfamily. Mg(2+) is required as a cofactor. It depends on Mn(2+) as a cofactor.

It carries out the reaction NAD(+) + (deoxyribonucleotide)n-3'-hydroxyl + 5'-phospho-(deoxyribonucleotide)m = (deoxyribonucleotide)n+m + AMP + beta-nicotinamide D-nucleotide.. DNA ligase that catalyzes the formation of phosphodiester linkages between 5'-phosphoryl and 3'-hydroxyl groups in double-stranded DNA using NAD as a coenzyme and as the energy source for the reaction. It is essential for DNA replication and repair of damaged DNA. This is DNA ligase 2 from Streptomyces coelicolor (strain ATCC BAA-471 / A3(2) / M145).